The following is a 203-amino-acid chain: Histidine biosynthesis bifunctional protein HisIE (203 aa).

Residues 1 to 114 (MLTEQQRREL…FGDASHQWLF (114 aa)) form a phosphoribosyl-AMP cyclohydrolase region. The segment at 115 to 203 (LYQLEQLLAE…VIDNLRKRHQ (89 aa)) is phosphoribosyl-ATP pyrophosphohydrolase.

In the N-terminal section; belongs to the PRA-CH family. It in the C-terminal section; belongs to the PRA-PH family.

The protein localises to the cytoplasm. It carries out the reaction 1-(5-phospho-beta-D-ribosyl)-ATP + H2O = 1-(5-phospho-beta-D-ribosyl)-5'-AMP + diphosphate + H(+). The enzyme catalyses 1-(5-phospho-beta-D-ribosyl)-5'-AMP + H2O = 1-(5-phospho-beta-D-ribosyl)-5-[(5-phospho-beta-D-ribosylamino)methylideneamino]imidazole-4-carboxamide. It participates in amino-acid biosynthesis; L-histidine biosynthesis; L-histidine from 5-phospho-alpha-D-ribose 1-diphosphate: step 2/9. Its pathway is amino-acid biosynthesis; L-histidine biosynthesis; L-histidine from 5-phospho-alpha-D-ribose 1-diphosphate: step 3/9. The sequence is that of Histidine biosynthesis bifunctional protein HisIE (hisI) from Salmonella typhimurium (strain LT2 / SGSC1412 / ATCC 700720).